Reading from the N-terminus, the 111-residue chain is Dynein light chain Tctex-type (111 aa).

Belongs to the dynein light chain Tctex-type family. The cytoplasmic dynein complex consists of two catalytic heavy chains (HCs) and a number of non-catalytic subunits presented by intermediate chains (ICs), light intermediate chains (LICs) and light chains (LCs).

It is found in the cytoplasm. The protein localises to the cytoskeleton. Its function is as follows. Acts as one of several non-catalytic accessory components of the cytoplasmic dynein complex that are thought to be involved in linking dynein to cargos and to adapter proteins that regulate dynein function. Cytoplasmic dynein acts as a motor for the intracellular retrograde motility of vesicles and organelles along microtubules. Required for spermatid differentiation. Is not required for polarized transport in rhabdomere development and appears to be a non-essential component of the cytoplasmic dynein complex. The polypeptide is Dynein light chain Tctex-type (Dlc90F) (Drosophila melanogaster (Fruit fly)).